The primary structure comprises 428 residues: Gamma-glutamyl phosphate reductase (428 aa).

This sequence belongs to the gamma-glutamyl phosphate reductase family.

The protein localises to the cytoplasm. It catalyses the reaction L-glutamate 5-semialdehyde + phosphate + NADP(+) = L-glutamyl 5-phosphate + NADPH + H(+). It functions in the pathway amino-acid biosynthesis; L-proline biosynthesis; L-glutamate 5-semialdehyde from L-glutamate: step 2/2. Functionally, catalyzes the NADPH-dependent reduction of L-glutamate 5-phosphate into L-glutamate 5-semialdehyde and phosphate. The product spontaneously undergoes cyclization to form 1-pyrroline-5-carboxylate. The protein is Gamma-glutamyl phosphate reductase of Agrobacterium fabrum (strain C58 / ATCC 33970) (Agrobacterium tumefaciens (strain C58)).